We begin with the raw amino-acid sequence, 468 residues long: uncharacterized protein (468 aa).

The signal sequence occupies residues 1–27 (MRKWYFILLAGVLTSVILAFVYDKTKA). 8 PbH1 repeats span residues 125 to 154 (KHDI…YVSG), 156 to 185 (SSHI…AVYG), 189 to 214 (MKDI…VLNG), 216 to 238 (IDGF…DLIG), 249 to 283 (VRNG…YVDG), 284 to 305 (GHDI…EATS), 312 to 334 (ANAI…SIGG), and 397 to 420 (NEGN…WMWK).

Its subcellular location is the secreted. This is an uncharacterized protein from Bacillus subtilis (strain 168).